We begin with the raw amino-acid sequence, 316 residues long: tRNA dimethylallyltransferase (316 aa).

Residue Gly-17–Thr-24 coordinates ATP. Substrate is bound at residue Thr-19–Thr-24. 3 interaction with substrate tRNA regions span residues Asp-42–Leu-45, Gln-166–Arg-170, and Arg-247–Arg-252.

The protein belongs to the IPP transferase family. In terms of assembly, monomer. Mg(2+) is required as a cofactor.

The catalysed reaction is adenosine(37) in tRNA + dimethylallyl diphosphate = N(6)-dimethylallyladenosine(37) in tRNA + diphosphate. Its function is as follows. Catalyzes the transfer of a dimethylallyl group onto the adenine at position 37 in tRNAs that read codons beginning with uridine, leading to the formation of N6-(dimethylallyl)adenosine (i(6)A). The sequence is that of tRNA dimethylallyltransferase from Salmonella paratyphi C (strain RKS4594).